A 117-amino-acid chain; its full sequence is Ribosome-binding factor A (117 aa).

This sequence belongs to the RbfA family. Monomer. Binds 30S ribosomal subunits, but not 50S ribosomal subunits or 70S ribosomes.

Its subcellular location is the cytoplasm. Its function is as follows. One of several proteins that assist in the late maturation steps of the functional core of the 30S ribosomal subunit. Associates with free 30S ribosomal subunits (but not with 30S subunits that are part of 70S ribosomes or polysomes). Required for efficient processing of 16S rRNA. May interact with the 5'-terminal helix region of 16S rRNA. This is Ribosome-binding factor A from Syntrophobacter fumaroxidans (strain DSM 10017 / MPOB).